Reading from the N-terminus, the 352-residue chain is DNA polymerase IV (352 aa).

In terms of domain architecture, UmuC spans I4–G185. 2 residues coordinate Mg(2+): D8 and D103. E104 is an active-site residue.

Belongs to the DNA polymerase type-Y family. In terms of assembly, monomer. The cofactor is Mg(2+).

Its subcellular location is the cytoplasm. It carries out the reaction DNA(n) + a 2'-deoxyribonucleoside 5'-triphosphate = DNA(n+1) + diphosphate. Functionally, poorly processive, error-prone DNA polymerase involved in untargeted mutagenesis. Copies undamaged DNA at stalled replication forks, which arise in vivo from mismatched or misaligned primer ends. These misaligned primers can be extended by PolIV. Exhibits no 3'-5' exonuclease (proofreading) activity. May be involved in translesional synthesis, in conjunction with the beta clamp from PolIII. The sequence is that of DNA polymerase IV from Enterobacter sp. (strain 638).